Consider the following 135-residue polypeptide: UPF0299 membrane protein PC1_1498 (135 aa).

4 consecutive transmembrane segments (helical) span residues 5–25, 30–50, 63–83, and 93–113; these read FIVC…LLAG, ALLP…FTLL, GCHL…VGVM, and FGPI…VVGF.

The protein belongs to the UPF0299 family.

The protein resides in the cell inner membrane. The chain is UPF0299 membrane protein PC1_1498 from Pectobacterium carotovorum subsp. carotovorum (strain PC1).